Consider the following 234-residue polypeptide: Large ribosomal subunit protein uL1 (234 aa).

The protein belongs to the universal ribosomal protein uL1 family. As to quaternary structure, part of the 50S ribosomal subunit.

Its function is as follows. Binds directly to 23S rRNA. The L1 stalk is quite mobile in the ribosome, and is involved in E site tRNA release. Protein L1 is also a translational repressor protein, it controls the translation of the L11 operon by binding to its mRNA. The chain is Large ribosomal subunit protein uL1 from Cronobacter sakazakii (strain ATCC BAA-894) (Enterobacter sakazakii).